The sequence spans 546 residues: Chaperonin GroEL 3 (546 aa).

ATP contacts are provided by residues 30-33 (TLGP), K51, 87-91 (DGTTT), G415, and D496.

Belongs to the chaperonin (HSP60) family. As to quaternary structure, forms a cylinder of 14 subunits composed of two heptameric rings stacked back-to-back. Interacts with the co-chaperonin GroES.

It localises to the cytoplasm. The catalysed reaction is ATP + H2O + a folded polypeptide = ADP + phosphate + an unfolded polypeptide.. Together with its co-chaperonin GroES, plays an essential role in assisting protein folding. The GroEL-GroES system forms a nano-cage that allows encapsulation of the non-native substrate proteins and provides a physical environment optimized to promote and accelerate protein folding. The protein is Chaperonin GroEL 3 of Bradyrhizobium diazoefficiens (strain JCM 10833 / BCRC 13528 / IAM 13628 / NBRC 14792 / USDA 110).